Reading from the N-terminus, the 318-residue chain is Death effector domain-containing protein (318 aa).

Residues 25 to 103 (SLHRMFDIVG…RHDLLPYVTL (79 aa)) enclose the DED domain. A disordered region spans residues 128-191 (PRALSDPEPR…SVTPDPKEKQ (64 aa)).

In terms of assembly, interacts with CASP8, CASP10, KRT8, KRT18, CASP3 and FADD. Homodimerizes and heterodimerizes with DEDD2. Post-translationally, exists predominantly in a mono- or diubiquitinated form. Ubiquitously expressed.

The protein resides in the cytoplasm. It is found in the nucleus. It localises to the nucleolus. A scaffold protein that directs CASP3 to certain substrates and facilitates their ordered degradation during apoptosis. May also play a role in mediating CASP3 cleavage of KRT18. Regulates degradation of intermediate filaments during apoptosis. May play a role in the general transcription machinery in the nucleus and might be an important regulator of the activity of GTF3C3. Inhibits DNA transcription in vitro. In Mus musculus (Mouse), this protein is Death effector domain-containing protein (Dedd).